A 472-amino-acid polypeptide reads, in one-letter code: N-succinylglutamate 5-semialdehyde dehydrogenase 1 (472 aa).

Residue 209–214 (GGVQAG) coordinates NAD(+). Catalysis depends on residues Glu232 and Cys266.

It belongs to the aldehyde dehydrogenase family. AstD subfamily.

It catalyses the reaction N-succinyl-L-glutamate 5-semialdehyde + NAD(+) + H2O = N-succinyl-L-glutamate + NADH + 2 H(+). It participates in amino-acid degradation; L-arginine degradation via AST pathway; L-glutamate and succinate from L-arginine: step 4/5. In terms of biological role, catalyzes the NAD-dependent reduction of succinylglutamate semialdehyde into succinylglutamate. The polypeptide is N-succinylglutamate 5-semialdehyde dehydrogenase 1 (Caulobacter vibrioides (strain ATCC 19089 / CIP 103742 / CB 15) (Caulobacter crescentus)).